The sequence spans 86 residues: RNA-binding protein Hfq (86 aa).

Positions 9–68 constitute a Sm domain; the sequence is DPYLNTLRKEKVPVSIYLVNGIKLQGSIESFDQFVVLLKNTVSQMVYKHAISTVVPARPV. Residues 66 to 86 form a disordered region; it reads RPVRLPSPTDSEHGDSEPGNA. The segment covering 75 to 86 has biased composition (basic and acidic residues); sequence DSEHGDSEPGNA.

This sequence belongs to the Hfq family. As to quaternary structure, homohexamer.

Its function is as follows. RNA chaperone that binds small regulatory RNA (sRNAs) and mRNAs to facilitate mRNA translational regulation in response to envelope stress, environmental stress and changes in metabolite concentrations. Also binds with high specificity to tRNAs. The sequence is that of RNA-binding protein Hfq from Pseudomonas putida (strain ATCC 700007 / DSM 6899 / JCM 31910 / BCRC 17059 / LMG 24140 / F1).